A 385-amino-acid chain; its full sequence is Rubredoxin-NAD(+) reductase (385 aa).

Residues 8 to 11 (AGTA), 32 to 33 (SR), Ile-79, Glu-156, Asp-275, and Ile-293 each bind FAD.

The protein belongs to the FAD-dependent oxidoreductase family. Homodimer. FAD serves as cofactor.

The protein localises to the cytoplasm. The catalysed reaction is 2 reduced [rubredoxin] + NAD(+) + H(+) = 2 oxidized [rubredoxin] + NADH. The protein operates within hydrocarbon metabolism; alkane degradation. Functionally, involved in the hydrocarbon hydroxylating system, which transfers electrons from NADH to rubredoxin reductase and then through rubredoxin to alkane 1 monooxygenase. The chain is Rubredoxin-NAD(+) reductase (alkT) from Ectopseudomonas oleovorans (Pseudomonas oleovorans).